Consider the following 560-residue polypeptide: Serine palmitoyltransferase 2 (560 aa).

Residues 65-85 traverse the membrane as a helical segment; that stretch reads PMLVAVLTYVGYGVLTLFGYL. At K377 the chain carries N6-(pyridoxal phosphate)lysine.

Belongs to the class-II pyridoxal-phosphate-dependent aminotransferase family. As to quaternary structure, component of the serine palmitoyltransferase (SPT) complex, which is composed of SPTLC1, SPTLC2 or SPTLC3 and SPTSSA or SPTSSB. The heterodimer consisting of SPTLC1 and SPTLC2/SPTLC3 forms the catalytic core of the enzyme, while SPTSSA or SPTSSB subunits determine substrate specificity. SPT also interacts with ORMDL proteins, especially ORMDL3, which negatively regulate SPT activity in the presence of ceramides. Forms dimers of heterodimers with SPTLC1. Pyridoxal 5'-phosphate serves as cofactor.

Its subcellular location is the endoplasmic reticulum membrane. It catalyses the reaction L-serine + hexadecanoyl-CoA + H(+) = 3-oxosphinganine + CO2 + CoA. The catalysed reaction is octadecanoyl-CoA + L-serine + H(+) = 3-oxoeicosasphinganine + CO2 + CoA. It participates in lipid metabolism; sphingolipid metabolism. Its activity is regulated as follows. SPT complex catalytic activity is negatively regulated by ORMDL proteins, including ORMDL3, in the presence of ceramides. This mechanism allows to maintain ceramide levels at sufficient concentrations for the production of complex sphingolipids, but which prevents the accumulation of ceramides to levels that trigger apoptosis. Its function is as follows. Component of the serine palmitoyltransferase multisubunit enzyme (SPT) that catalyzes the initial and rate-limiting step in sphingolipid biosynthesis by condensing L-serine and activated acyl-CoA (most commonly palmitoyl-CoA) to form long-chain bases. The SPT complex is composed of SPTLC1, SPTLC2 or SPTLC3 and SPTSSA or SPTSSB. Within this complex, the heterodimer consisting of SPTLC1 and SPTLC2/SPTLC3 forms the catalytic core. The composition of the serine palmitoyltransferase (SPT) complex determines the substrate preference. The SPTLC1-SPTLC2-SPTSSA complex shows a strong preference for C16-CoA substrate, while the SPTLC1-SPTLC3-SPTSSA isozyme uses both C14-CoA and C16-CoA as substrates, with a slight preference for C14-CoA. The SPTLC1-SPTLC2-SPTSSB complex shows a strong preference for C18-CoA substrate, while the SPTLC1-SPTLC3-SPTSSB isozyme displays an ability to use a broader range of acyl-CoAs, without apparent preference. Crucial for adipogenesis. The chain is Serine palmitoyltransferase 2 (SPTLC2) from Cricetulus griseus (Chinese hamster).